The primary structure comprises 340 residues: Thioesterase pkgB (340 aa).

Zn(2+) is bound by residues H97, H99, D101, H102, and H205. D101 serves as the catalytic Proton donor/acceptor. Positions 242–258 (SSRNGGSTSSIGSVSES) are enriched in low complexity. A disordered region spans residues 242 to 271 (SSRNGGSTSSIGSVSESGDSDEEDNNMKTS).

Belongs to the metallo-beta-lactamase superfamily. Zn(2+) serves as cofactor.

The enzyme catalyses 3,5,7,9,11,13-hexaoxotetradecanoyl-[ACP] = dehydrocitreoisocoumarin + holo-[ACP] + H2O. It carries out the reaction 3,5,7,9,11-pentaoxododecanoyl-[ACP] = 6,8-dihydroxy-3-(2-oxopropyl)-isocoumarin + holo-[ACP] + H2O. Functionally, thioesterase; part of the pkg gene cluster that mediates the biosynthesis of dihydrocitreoisocoumarin and 6,8-dihydroxy-3-(2-oxopropyl)-isocoumarin. The non-reducing polyketide synthase pkgA performs the condensation of one acetyl-CoA starter unit with 6 and 5 malonyl-CoA units, respectively. As pkgA lacks a releasing domain, the thioesterase pkgB is necessary to break the thioester bond and release dihydrocitreoisocoumarin and 6,8-dihydroxy-3-(2-oxopropyl)-isocoumarin from pkgA. The sequence is that of Thioesterase pkgB from Emericella nidulans (strain FGSC A4 / ATCC 38163 / CBS 112.46 / NRRL 194 / M139) (Aspergillus nidulans).